A 357-amino-acid chain; its full sequence is Guanine nucleotide-binding protein alpha-2 subunit (357 aa).

Gly2 carries N-myristoyl glycine lipidation. Residue Cys4 is the site of S-palmitoyl cysteine attachment. The G-alpha domain maps to 30 to 356; the sequence is NEVKLLLLGA…TQCVMKAGLY (327 aa). A G1 motif region spans residues 33–46; sequence KLLLLGAGESGKST. GTP contacts are provided by Glu41, Ser42, Gly43, Lys44, Ser45, and Thr46. Ser45 contributes to the Mg(2+) binding site. Ser113 carries the phosphoserine modification. Residues Asp154, Leu179, Thr185, Gly207, Asn272, Lys273, Asp275, and Ala328 each coordinate GTP. Residues 177-185 form a G2 motif region; it reads DILHTRVMT. A Mg(2+)-binding site is contributed by Thr185. The tract at residues 200-209 is G3 motif; the sequence is FRLVDVGGQR. The segment at 268 to 275 is G4 motif; it reads ILFLNKSD. Positions 326-331 are G5 motif; that stretch reads TCATDT.

Belongs to the G-alpha family. As to quaternary structure, g proteins are composed of 3 units; alpha, beta and gamma. The alpha chain contains the guanine nucleotide binding site. Interacts with the RAP guanine nucleotide exchange factor glfB. The cofactor is Mg(2+). Ser-113 is transiently phosphorylated following stimulation with extracellular cAMP.

In terms of biological role, guanine nucleotide-binding proteins (G proteins) are involved as modulators or transducers in various transmembrane signaling systems. G alpha-2 is required for the early aggregation process and most of the known cAMP receptor-mediated responses. Interacts with downstream effector gflB, a Rap guanine nucleotide exchange factor, to regulate the balance between Ras and Rap signaling at the leading edge of chemotaxing cells. This chain is Guanine nucleotide-binding protein alpha-2 subunit (gpaB), found in Dictyostelium discoideum (Social amoeba).